The primary structure comprises 349 residues: Terpene synthase 2 (349 aa).

The DDxx(x)D/E motif signature appears at 84–89 (DDLFDG). The NDxxSxxxD/E motif motif lies at 229 to 237 (NDCVSYEKE).

It belongs to the terpene synthase family.

It carries out the reaction (2E,6E)-farnesyl diphosphate = (3S)-(+)-asterisca-2(9),6-diene + diphosphate. The catalysed reaction is (2E)-geranyl diphosphate = (Z)-beta-ocimene + diphosphate. The enzyme catalyses (2E)-geranyl diphosphate + H2O = linalool + diphosphate. Functionally, terpene synthase that converts its substrate farnesyl diphosphate (FPP) into the sesquiterpene (3S)-(+)-asterisca-2(9),6-diene. Is also able to convert geranyl diphosphate (GPP) into a mixture of monoterpenes including (Z)-beta-ocimene, allo-ocimene and linalool. The sequence is that of Terpene synthase 2 from Dictyostelium discoideum (Social amoeba).